Consider the following 674-residue polypeptide: MLSSTFVRTKAGRSKPVRLTAVIAAALFLAGCPSQAPQTPPANIQDEASASSDYYLQQLQQSSNDNKADWQLLAIRALLREGKLPQASEQLNQLPKNLSSVQQVESQLLTAELQVANKSYVSARSTLGHIDSGSLSANQLVRFYQAQIAVNQGKASLPLIRAYIAQEPLLTGKAHQNNLDQTWQSLLQLTPQDMNSLVINANENVLQGWLDLLRVYQDNKQDPDLLKAGIKDWQNRYPQNPAAKTLPTQLNQVLHFTQASTSKIALLLPLNGQAKVFADAIQKGFEAAKNGVTPSTPVQQQQPASVPEQAAQPASTDPNANGAVSTSAPDAAPVTAAQPSAPSTAPITPPQAANAQIKVYDTSSQPLAALLTQAQQDGATLVVGPLLKENVDQLASSTTTLNVLALNQPETPKDNPNICYFALSPEDEARDAARHIWEQQKRQPLLLIPRGAFGDRVAKAFNQEWQKLGGQTVLQQGIGSASELRQMVNSGGIRMSGTPISTAPAPQAVTIAGLTIPAPPSDTPATSGGSVDSVYIVATQSQLTLIKPMIDMATNSRSKPAMYASSRSYQAGAGPDFRLEMEGLQFSDIPLLAGANPQLLQQASSQFRNDYSLVRLYAMGMDAWTLSNHFAEMRQLPGFQVSGTTGVLTAAPGCVINRKLPWLQYRQGTVVPVS.

The N-terminal stretch at 1 to 31 (MLSSTFVRTKAGRSKPVRLTAVIAAALFLAG) is a signal peptide. Cys-32 carries the N-palmitoyl cysteine lipid modification. Cys-32 is lipidated: S-diacylglycerol cysteine. The segment at 291–349 (GVTPSTPVQQQQPASVPEQAAQPASTDPNANGAVSTSAPDAAPVTAAQPSAPSTAPITP) is disordered. A compositionally biased stretch (low complexity) spans 292–315 (VTPSTPVQQQQPASVPEQAAQPAS). Over residues 316–328 (TDPNANGAVSTSA) the composition is skewed to polar residues. Over residues 331-349 (AAPVTAAQPSAPSTAPITP) the composition is skewed to low complexity.

Belongs to the LpoA family. As to quaternary structure, interacts with PBP1a.

Its subcellular location is the cell outer membrane. In terms of biological role, regulator of peptidoglycan synthesis that is essential for the function of penicillin-binding protein 1A (PBP1a). The chain is Penicillin-binding protein activator LpoA from Serratia proteamaculans (strain 568).